A 457-amino-acid polypeptide reads, in one-letter code: PE-PGRS family protein PE_PGRS18 (457 aa).

One can recognise a PE domain in the interval 1-92; that stretch reads MSFVNVAPQL…SSTYAVAEAA (92 aa). 4 NHL repeats span residues 291–321, 333–363, 379–404, and 419–447; these read FNDP…IDPV, NGPS…IDPN, GVAV…IDPA, and PTGV…ITGE.

The protein belongs to the mycobacterial PE family. PGRS subfamily.

The protein resides in the secreted. It is found in the cell wall. In terms of biological role, enhances mycobacterial intracellular survival, probably via altering host macrophage cytokine profiling and attenuating the cell apoptosis. Could be required for host endothelial-cell invasion. Expression in Mycobacterium smegmatis, a nonpathogenic species naturally deficient in PE_PGRS genes, results in alteration of the production of host cytokines, including IL-6, IL-1beta, IL-10 and IL-12p40, as well as enhanced survival within macrophages largely via attenuating the apoptosis of macrophages. The protein is PE-PGRS family protein PE_PGRS18 of Mycobacterium tuberculosis (strain ATCC 25618 / H37Rv).